The sequence spans 235 residues: Ubiquitin-like-conjugating enzyme ATG10 (235 aa).

The Glycyl thioester intermediate role is filled by C196.

Belongs to the ATG10 family. In terms of assembly, forms homooligomers. Interacts with ATG7 and ATG12.

It localises to the preautophagosomal structure membrane. Functionally, E2-like enzyme required for the cytoplasm to vacuole transport (Cvt), autophagy and nucleophagy. Acts as an E2-like enzyme that catalyzes the conjugation of ATG12 to ATG5. ATG12 conjugation to ATG5 is required for proper localization of ATG8 to the preautophagosomal structure (PAS). Likely serves as an ATG5-recognition molecule. Autophagy is required for proper vegetative growth, asexual/sexual reproduction, and full virulence. Autophagy is particularly involved in the biosynthesis of deoxynivalenol (DON), an important virulence determinant. The protein is Ubiquitin-like-conjugating enzyme ATG10 of Gibberella zeae (strain ATCC MYA-4620 / CBS 123657 / FGSC 9075 / NRRL 31084 / PH-1) (Wheat head blight fungus).